A 75-amino-acid polypeptide reads, in one-letter code: Putative snRNP Sm-like protein (75 aa).

The 72-residue stretch at Arg4 to Glu75 folds into the Sm domain.

The protein belongs to the snRNP Sm proteins family.

This Pyrococcus horikoshii (strain ATCC 700860 / DSM 12428 / JCM 9974 / NBRC 100139 / OT-3) protein is Putative snRNP Sm-like protein.